Here is a 356-residue protein sequence, read N- to C-terminus: L-Ala-D/L-Glu epimerase (356 aa).

161 to 163 is a binding site for substrate; it reads KVK. 3 residues coordinate Mg(2+): Asp191, Glu219, and Asp244. Residues Lys268 and 320 to 322 each bind substrate; that span reads DLD.

This sequence belongs to the mandelate racemase/muconate lactonizing enzyme family. It depends on Mg(2+) as a cofactor.

It catalyses the reaction L-alanyl-L-glutamate = L-alanyl-D-glutamate. Functionally, dipeptide epimerase with a preference for substrates containing a Glu residue in the second position. Catalyzes the epimerization of L-Ala-L-Glu, L-Ser-L-Glu, L-Thr-L-Glu, L-Val-L-Glu, L-Gly-L-Glu and L-Thr-L-Glu (in vitro). May play a role in the metabolism of the murein peptide, of which L-Ala-D-Glu is a component. The polypeptide is L-Ala-D/L-Glu epimerase (Francisella tularensis subsp. novicida (strain U112)).